Consider the following 362-residue polypeptide: Phosphoserine aminotransferase (362 aa).

L-glutamate is bound by residues Ser-9 and Arg-42. Residues 76–77, Trp-102, Thr-153, Asp-174, and Gln-197 each bind pyridoxal 5'-phosphate; that span reads GR. At Lys-198 the chain carries N6-(pyridoxal phosphate)lysine. 239–240 provides a ligand contact to pyridoxal 5'-phosphate; sequence NT.

The protein belongs to the class-V pyridoxal-phosphate-dependent aminotransferase family. SerC subfamily. Homodimer. Pyridoxal 5'-phosphate serves as cofactor.

It is found in the cytoplasm. It carries out the reaction O-phospho-L-serine + 2-oxoglutarate = 3-phosphooxypyruvate + L-glutamate. It catalyses the reaction 4-(phosphooxy)-L-threonine + 2-oxoglutarate = (R)-3-hydroxy-2-oxo-4-phosphooxybutanoate + L-glutamate. The protein operates within amino-acid biosynthesis; L-serine biosynthesis; L-serine from 3-phospho-D-glycerate: step 2/3. It functions in the pathway cofactor biosynthesis; pyridoxine 5'-phosphate biosynthesis; pyridoxine 5'-phosphate from D-erythrose 4-phosphate: step 3/5. In terms of biological role, catalyzes the reversible conversion of 3-phosphohydroxypyruvate to phosphoserine and of 3-hydroxy-2-oxo-4-phosphonooxybutanoate to phosphohydroxythreonine. The chain is Phosphoserine aminotransferase from Shigella dysenteriae serotype 1 (strain Sd197).